The chain runs to 684 residues: DNA ligase (684 aa).

NAD(+)-binding positions include 46-50, 100-101, and Glu-130; these read DYVYD and SL. Catalysis depends on Lys-132, which acts as the N6-AMP-lysine intermediate. NAD(+) is bound by residues Arg-153, Glu-187, Lys-303, and Lys-327. Cys-421, Cys-424, Cys-439, and Cys-444 together coordinate Zn(2+). One can recognise a BRCT domain in the interval 604–684; the sequence is DEKNYFFNKR…DFINLSNAKK (81 aa).

Belongs to the NAD-dependent DNA ligase family. LigA subfamily. The cofactor is Mg(2+). Requires Mn(2+) as cofactor.

It carries out the reaction NAD(+) + (deoxyribonucleotide)n-3'-hydroxyl + 5'-phospho-(deoxyribonucleotide)m = (deoxyribonucleotide)n+m + AMP + beta-nicotinamide D-nucleotide.. Its function is as follows. DNA ligase that catalyzes the formation of phosphodiester linkages between 5'-phosphoryl and 3'-hydroxyl groups in double-stranded DNA using NAD as a coenzyme and as the energy source for the reaction. It is essential for DNA replication and repair of damaged DNA. The sequence is that of DNA ligase from Oenococcus oeni (strain ATCC BAA-331 / PSU-1).